A 380-amino-acid chain; its full sequence is Succinyl-diaminopimelate desuccinylase (380 aa).

Residue His66 coordinates Zn(2+). Residue Asp68 is part of the active site. Residue Asp99 coordinates Zn(2+). Glu135 acts as the Proton acceptor in catalysis. Zn(2+)-binding residues include Glu136, Glu164, and His350.

The protein belongs to the peptidase M20A family. DapE subfamily. Homodimer. Zn(2+) serves as cofactor. Requires Co(2+) as cofactor.

It carries out the reaction N-succinyl-(2S,6S)-2,6-diaminopimelate + H2O = (2S,6S)-2,6-diaminopimelate + succinate. The protein operates within amino-acid biosynthesis; L-lysine biosynthesis via DAP pathway; LL-2,6-diaminopimelate from (S)-tetrahydrodipicolinate (succinylase route): step 3/3. Functionally, catalyzes the hydrolysis of N-succinyl-L,L-diaminopimelic acid (SDAP), forming succinate and LL-2,6-diaminopimelate (DAP), an intermediate involved in the bacterial biosynthesis of lysine and meso-diaminopimelic acid, an essential component of bacterial cell walls. This Magnetococcus marinus (strain ATCC BAA-1437 / JCM 17883 / MC-1) protein is Succinyl-diaminopimelate desuccinylase.